The following is a 248-amino-acid chain: MTKLEICCFSVGCALIAQQAGADRIELCASPAEGGLTPSFGTLKQAIEQLTIPVYPIVRPRGGDFCYSHSDFEVMKNDVAQIRDMGFMGVVFGVLDEEGHIDLPRMQQLMALSGDMAVTFHRAFDMCFNPYVALDQLTQLGVKRILTSGQQQNAELGLPLLKELHQASQGPIIMAGAGVRMSNIHKFIDIGLTEVHSSASRIMLSTMTYRKAGVTMSADNEVDEFSHYCVDGGVVEVMKGMLSLTLFE.

Belongs to the CutC family.

Its subcellular location is the cytoplasm. The protein is PF03932 family protein CutC of Photorhabdus laumondii subsp. laumondii (strain DSM 15139 / CIP 105565 / TT01) (Photorhabdus luminescens subsp. laumondii).